A 263-amino-acid polypeptide reads, in one-letter code: Chymotrypsinogen B2 (263 aa).

The N-terminal stretch at 1-18 (MAFLWLLSCWALLGTTFG) is a signal peptide. Cystine bridges form between Cys19–Cys140, Cys60–Cys76, Cys154–Cys219, Cys186–Cys200, and Cys209–Cys238. Positions 34–261 (IVNGEDAVPG…LIPWVQKILA (228 aa)) constitute a Peptidase S1 domain. Residues His75 and Asp120 each act as charge relay system in the active site. The Charge relay system role is filled by Ser213.

This sequence belongs to the peptidase S1 family.

It is found in the secreted. The protein localises to the extracellular space. It carries out the reaction Preferential cleavage: Tyr-|-Xaa, Trp-|-Xaa, Phe-|-Xaa, Leu-|-Xaa.. This chain is Chymotrypsinogen B2 (CTRB2), found in Homo sapiens (Human).